Reading from the N-terminus, the 127-residue chain is uncharacterized protein (127 aa).

Residues 1–17 (MQGSVQIQKGNISSSYT) are compositionally biased toward polar residues. A disordered region spans residues 1–36 (MQGSVQIQKGNISSSYTPEKHPSHPTSANGSMSPKR).

This is an uncharacterized protein from Treponema pallidum (strain Nichols).